The primary structure comprises 371 residues: Cytochrome b (371 aa).

4 consecutive transmembrane segments (helical) span residues 24 to 44 (FGSM…FLAL), 68 to 89 (WTMQ…YIHI), 104 to 124 (WLSG…GYVL), and 169 to 189 (FFAL…VHIV). Heme b-binding residues include His-74 and His-88. 2 residues coordinate heme b: His-173 and His-187. Residue His-192 participates in a ubiquinone binding. Helical transmembrane passes span 217–237 (YKDT…MSFA), 279–299 (LGGT…PFTH), 311–331 (LSQL…WTAT), and 338–357 (FITI…MTNP).

Belongs to the cytochrome b family. As to quaternary structure, the cytochrome bc1 complex contains 3 respiratory subunits (MT-CYB, CYC1 and UQCRFS1), 2 core proteins (UQCRC1 and UQCRC2) and probably 6 low-molecular weight proteins. Requires heme b as cofactor.

The protein localises to the mitochondrion inner membrane. Functionally, component of the ubiquinol-cytochrome c reductase complex (complex III or cytochrome b-c1 complex) that is part of the mitochondrial respiratory chain. The b-c1 complex mediates electron transfer from ubiquinol to cytochrome c. Contributes to the generation of a proton gradient across the mitochondrial membrane that is then used for ATP synthesis. The chain is Cytochrome b (MT-CYB) from Homoroselaps lacteus (Spotted harlequin snake).